Consider the following 296-residue polypeptide: Acetylglutamate kinase (296 aa).

Substrate-binding positions include 69-70, R91, and N192; that span reads GG.

Belongs to the acetylglutamate kinase family. ArgB subfamily.

The protein localises to the cytoplasm. It carries out the reaction N-acetyl-L-glutamate + ATP = N-acetyl-L-glutamyl 5-phosphate + ADP. Its pathway is amino-acid biosynthesis; L-arginine biosynthesis; N(2)-acetyl-L-ornithine from L-glutamate: step 2/4. Functionally, catalyzes the ATP-dependent phosphorylation of N-acetyl-L-glutamate. This is Acetylglutamate kinase from Ruthia magnifica subsp. Calyptogena magnifica.